The sequence spans 561 residues: Potassium-transporting ATPase potassium-binding subunit (561 aa).

A run of 11 helical transmembrane segments spans residues 5–25, 63–83, 103–122, 133–153, 179–199, 255–275, 281–301, 380–400, 418–438, 485–505, and 531–551; these read IELF…GTYM, KYAL…YFIL, LAFN…HYAG, IVIV…AAAI, LLPI…PQTF, IEML…GLMI, ALVL…GAVY, AGLQ…GLMV, LIAL…ALTV, IMTG…MLAV, and AIFI…AVIL.

The protein belongs to the KdpA family. In terms of assembly, the system is composed of three essential subunits: KdpA, KdpB and KdpC.

It localises to the cell membrane. Its function is as follows. Part of the high-affinity ATP-driven potassium transport (or Kdp) system, which catalyzes the hydrolysis of ATP coupled with the electrogenic transport of potassium into the cytoplasm. This subunit binds the extracellular potassium ions and delivers the ions to the membrane domain of KdpB through an intramembrane tunnel. The sequence is that of Potassium-transporting ATPase potassium-binding subunit from Caldanaerobacter subterraneus subsp. tengcongensis (strain DSM 15242 / JCM 11007 / NBRC 100824 / MB4) (Thermoanaerobacter tengcongensis).